The sequence spans 158 residues: Small ribosomal subunit protein uS15 (158 aa).

Residues 1–18 are compositionally biased toward basic residues; it reads MARMHARKRGKSGSKRPP. The disordered stretch occupies residues 1–21; sequence MARMHARKRGKSGSKRPPRTA.

The protein belongs to the universal ribosomal protein uS15 family. As to quaternary structure, part of the 30S ribosomal subunit.

The chain is Small ribosomal subunit protein uS15 from Pyrococcus furiosus (strain ATCC 43587 / DSM 3638 / JCM 8422 / Vc1).